We begin with the raw amino-acid sequence, 95 residues long: Aspartyl/glutamyl-tRNA(Asn/Gln) amidotransferase subunit C (95 aa).

It belongs to the GatC family. As to quaternary structure, heterotrimer of A, B and C subunits.

The catalysed reaction is L-glutamyl-tRNA(Gln) + L-glutamine + ATP + H2O = L-glutaminyl-tRNA(Gln) + L-glutamate + ADP + phosphate + H(+). It carries out the reaction L-aspartyl-tRNA(Asn) + L-glutamine + ATP + H2O = L-asparaginyl-tRNA(Asn) + L-glutamate + ADP + phosphate + 2 H(+). Its function is as follows. Allows the formation of correctly charged Asn-tRNA(Asn) or Gln-tRNA(Gln) through the transamidation of misacylated Asp-tRNA(Asn) or Glu-tRNA(Gln) in organisms which lack either or both of asparaginyl-tRNA or glutaminyl-tRNA synthetases. The reaction takes place in the presence of glutamine and ATP through an activated phospho-Asp-tRNA(Asn) or phospho-Glu-tRNA(Gln). In Geotalea uraniireducens (strain Rf4) (Geobacter uraniireducens), this protein is Aspartyl/glutamyl-tRNA(Asn/Gln) amidotransferase subunit C.